The chain runs to 233 residues: Protein lin-7 homolog A (233 aa).

The short motif at 14–28 (MATLTVVQPLTLDRD) is the Kinase interacting site element. Positions 25-80 (LDRDVARAIELLEKLQESGEVPVHKLQSLKKVLQSEFCTAIREVYQYMHETITVNG) constitute an L27 domain. One can recognise a PDZ domain in the interval 108-190 (VVELPKTDEG…SVKLVVRYTP (83 aa)). A disordered region spans residues 214–233 (LLIQQQQQQQQQQPQQNHMS).

The protein belongs to the lin-7 family. In terms of assembly, forms a complex with CASK and CASKIN1. Component of the brain-specific heterotrimeric complex (LIN-10-LIN-2-LIN-7 complex) composed of at least APBA1, CASK, and LIN7, which associates with the motor protein KIF17 to transport vesicles along microtubules. Can also interact with other modular proteins containing protein-protein interaction domains like PALS1, PALS2, MPP7, DLG1, DLG2 and DLG3 through its L27 domain. Interacts with DLG4, GRIN2B and MARCHF11 as well as CDH1 and CTNNB1, the channels KCNJ12/Kir2.2, KCNJ4/Kir2.3 and probably KCNJ2/Kir2.1 and SLC6A12/BGT-1 via its PDZ domain. The association of LIN7A with cadherin and beta-catenin is calcium-dependent, occurs at synaptic junctions and requires the actin cytoskeleton. Interacts with EGFR, ERBB2, ERBB3 and ERBB4 with both PDZ and KID domains. Associates with KIF17 via APBA1. Interacts with HTR4. Forms a tripartite complex composed of DLG1, MPP7 and LIN7 (LIN7A or LIN7C). Expressed in the kidney, along the length of the nephron.

It is found in the cell membrane. The protein resides in the basolateral cell membrane. Its subcellular location is the cell junction. The protein localises to the postsynaptic density membrane. It localises to the tight junction. Plays a role in establishing and maintaining the asymmetric distribution of channels and receptors at the plasma membrane of polarized cells. Forms membrane-associated multiprotein complexes that may regulate delivery and recycling of proteins to the correct membrane domains. The tripartite complex composed of LIN7 (LIN7A, LIN7B or LIN7C), CASK and APBA1 associates with the motor protein KIF17 to transport vesicles containing N-methyl-D-aspartate (NMDA) receptor subunit NR2B along microtubules. This complex may have the potential to couple synaptic vesicle exocytosis to cell adhesion in brain. Ensures the proper localization of GRIN2B (subunit 2B of the NMDA receptor) to neuronal postsynaptic density and may function in localizing synaptic vesicles at synapses where it is recruited by beta-catenin and cadherin. Required to localize Kir2 channels, GABA transporter (SLC6A12) and EGFR/ERBB1, ERBB2, ERBB3 and ERBB4 to the basolateral membrane of epithelial cells. This is Protein lin-7 homolog A (Lin7a) from Mus musculus (Mouse).